Consider the following 314-residue polypeptide: Ribosomal RNA large subunit methyltransferase F (314 aa).

This sequence belongs to the methyltransferase superfamily. METTL16/RlmF family.

The protein localises to the cytoplasm. It carries out the reaction adenosine(1618) in 23S rRNA + S-adenosyl-L-methionine = N(6)-methyladenosine(1618) in 23S rRNA + S-adenosyl-L-homocysteine + H(+). Specifically methylates the adenine in position 1618 of 23S rRNA. This Flavobacterium psychrophilum (strain ATCC 49511 / DSM 21280 / CIP 103535 / JIP02/86) protein is Ribosomal RNA large subunit methyltransferase F.